We begin with the raw amino-acid sequence, 359 residues long: DNA replication and repair protein RecF (359 aa).

An ATP-binding site is contributed by 30 to 37; the sequence is GPNGSGKT.

It belongs to the RecF family.

It localises to the cytoplasm. The RecF protein is involved in DNA metabolism; it is required for DNA replication and normal SOS inducibility. RecF binds preferentially to single-stranded, linear DNA. It also seems to bind ATP. The sequence is that of DNA replication and repair protein RecF from Vibrio parahaemolyticus serotype O3:K6 (strain RIMD 2210633).